The primary structure comprises 406 residues: telomere-associated protein 1 (406 aa).

Positions 20–40 (EHHNGSHDNDDKDKEDKEKQN) are enriched in basic and acidic residues. The interval 20–46 (EHHNGSHDNDDKDKEDKEKQNTEAVAA) is disordered. The HTH myb-type domain occupies 147–206 (TTRRVRLRWTQEETADLMEGCKVHGVGNWKKILTDPRFRFNNRTAVDLKDRFRTCFPEDY). Positions 175-202 (WKKILTDPRFRFNNRTAVDLKDRFRTCF) form a DNA-binding region, H-T-H motif. The region spanning 234-288 (VNRKERRVFTPEEDERLLNGFMKHGPSWSNIQRDNELGLFERRSTDLRDRFRNAF) is the Myb-like domain. Residues 368 to 389 (TQELQPQAHSRKQQGGDGLKEE) form a disordered region.

The protein resides in the nucleus. Its subcellular location is the chromosome. It is found in the telomere. Functionally, telomere-binding protein that mediates telomere clustering by promoting formation of head-to-head dimers of DNA molecules through the telomeric tracts. Binds specifically 5'-TTAGTCAGGG-3' repeats in subtelomeric regions. This is telomere-associated protein 1 from Yarrowia lipolytica (strain CLIB 122 / E 150) (Yeast).